The chain runs to 233 residues: Phosphoribosylaminoimidazole-succinocarboxamide synthase (233 aa).

This sequence belongs to the SAICAR synthetase family.

The catalysed reaction is 5-amino-1-(5-phospho-D-ribosyl)imidazole-4-carboxylate + L-aspartate + ATP = (2S)-2-[5-amino-1-(5-phospho-beta-D-ribosyl)imidazole-4-carboxamido]succinate + ADP + phosphate + 2 H(+). Its pathway is purine metabolism; IMP biosynthesis via de novo pathway; 5-amino-1-(5-phospho-D-ribosyl)imidazole-4-carboxamide from 5-amino-1-(5-phospho-D-ribosyl)imidazole-4-carboxylate: step 1/2. This chain is Phosphoribosylaminoimidazole-succinocarboxamide synthase, found in Thermococcus sibiricus (strain DSM 12597 / MM 739).